The primary structure comprises 501 residues: Type II methyltransferase M.BsuBI (501 aa).

The protein belongs to the N(4)/N(6)-methyltransferase family.

It catalyses the reaction a 2'-deoxyadenosine in DNA + S-adenosyl-L-methionine = an N(6)-methyl-2'-deoxyadenosine in DNA + S-adenosyl-L-homocysteine + H(+). Functionally, a beta subtype methylase that recognizes the double-stranded sequence 5'-CTGCAG-3', methylates A-5 on both strands, and protects the DNA from cleavage by the BsuBI endonuclease. This chain is Type II methyltransferase M.BsuBI (hsdBM), found in Bacillus subtilis.